The chain runs to 1598 residues: Fatty acid synthase subunit alpha (1598 aa).

A disordered region spans residues 96–134 (RTQPHKSSAPQEPVPKAAPKAAPPVPVATAPLPEPGRQV). Low complexity predominate over residues 104–115 (APQEPVPKAAPK). The Carrier domain maps to 143-221 (DVPIQSRDVI…QIVSGSTSTT (79 aa)). The residue at position 181 (Ser181) is an O-(pantetheine 4'-phosphoryl)serine. The interval 543–784 (LKGKTVLLTG…LAALLVNPFA (242 aa)) is ketoreductase (KR) domain. The segment at 818–844 (KQDSTSTPTHQHLPSHHHVDEPEIGKP) is disordered. Over residues 820-829 (DSTSTPTHQH) the composition is skewed to polar residues. Residues 992–1524 (HEIVLTRDLA…QKGAQAIIVH (533 aa)) enclose the Ketosynthase family 3 (KS3) domain. Cys1175 serves as the catalytic For beta-ketoacyl synthase activity. The tract at residues 1280–1301 (ASDKTGRSVPSPGKGTLTNARE) is disordered. Active-site for beta-ketoacyl synthase activity residues include His1409 and His1450.

It belongs to the thiolase-like superfamily. Fungal fatty acid synthetase subunit alpha family. In terms of assembly, fatty acid synthase is composed of alpha and beta subunits.

The catalysed reaction is acetyl-CoA + n malonyl-CoA + 2n NADPH + 4n H(+) = a long-chain-acyl-CoA + n CoA + n CO2 + 2n NADP(+).. The enzyme catalyses a fatty acyl-[ACP] + malonyl-[ACP] + H(+) = a 3-oxoacyl-[ACP] + holo-[ACP] + CO2. It carries out the reaction a (3R)-hydroxyacyl-[ACP] + NADP(+) = a 3-oxoacyl-[ACP] + NADPH + H(+). It participates in mycotoxin biosynthesis. Functionally, fatty acid synthase subunit alpha; part of the gene cluster that mediates the biosynthesis of gramillins A and B, bicyclic lipopeptides that induce cell death in maize leaves but not in wheat leaves. The nonribosomal peptide synthetase GRA1 incorporates respectively a glutamic adic (Glu), a leucine (Leu), a serine (Ser), a hydroxyglutamine (HOGln), a 2-amino decanoic acid, and 2 cysteins (CysB and CysA). The biosynthesis of 2-amino decanoic acid incorporated in gramillins could be initiated by a fatty acid synthase composed of the alpha and beta subunits FGSG_00036 and FGSG_11656. The cytochrome P450 monooxygenase FGSG_15680 could hydroxylate the fatty acid chain. Subsequent oxidation to the ketone by the oxidoreductase FGSG_00048 and transamination by aminotransferase FGSG_00049 could form 2-amino-decanoic acid. On the other hand, FGSG_15680 could also be responsible for the HO-modified glutamine at the gamma-position. Whether hydroxylation occurs on the fully assembled product or on the Gln residue prior to assembly into the gramillins requires further proof. The thioredoxin FGSG_00043 could also be required for the disulfide-bond formation between CysA and CysB. The specific involvement of the remaining proteins from the cluster is more difficult to discern, but could have broader regulatory (FGSG_00040 and FGSG_11657) or enzymatic functions (FGSG_00044 and FGSG_00045). The final C-domain of GRA1 does not possess the expected sequence of a termination CT domain, often implicated in macrocyclization and release of a cyclopeptidein fungal NRPs; and the thioesterase FGSG_00047 may act in concert with the terminal C-domain of GRA1 to catalyze the formation of the macrocyclic anhydride and release of the products. This chain is Fatty acid synthase subunit alpha, found in Gibberella zeae (strain ATCC MYA-4620 / CBS 123657 / FGSC 9075 / NRRL 31084 / PH-1) (Wheat head blight fungus).